A 208-amino-acid polypeptide reads, in one-letter code: FMN-dependent NADH:quinone oxidoreductase (208 aa).

FMN contacts are provided by residues 17-19 (SNS), 99-102 (MWNL), and 143-146 (SRGG).

It belongs to the azoreductase type 1 family. In terms of assembly, homodimer. The cofactor is FMN.

It carries out the reaction 2 a quinone + NADH + H(+) = 2 a 1,4-benzosemiquinone + NAD(+). It catalyses the reaction N,N-dimethyl-1,4-phenylenediamine + anthranilate + 2 NAD(+) = 2-(4-dimethylaminophenyl)diazenylbenzoate + 2 NADH + 2 H(+). Its function is as follows. Quinone reductase that provides resistance to thiol-specific stress caused by electrophilic quinones. Functionally, also exhibits azoreductase activity. Catalyzes the reductive cleavage of the azo bond in aromatic azo compounds to the corresponding amines. The chain is FMN-dependent NADH:quinone oxidoreductase from Staphylococcus aureus (strain MRSA252).